The sequence spans 321 residues: Protoheme IX farnesyltransferase (321 aa).

10 consecutive transmembrane segments (helical) span residues 28–48 (VMSL…DPVH), 49–69 (PIVG…SGAL), 94–114 (VMPN…VFTL), 116–136 (IVAN…YVVI), 149–169 (IVIG…AATG), 176–196 (FILF…LALG), 222–242 (ILLY…LGFA), 247–267 (GMLS…VYIV), 277–297 (AKAL…EIVV), and 300–320 (LVPI…PGFF).

It belongs to the UbiA prenyltransferase family. Protoheme IX farnesyltransferase subfamily.

Its subcellular location is the cell inner membrane. The enzyme catalyses heme b + (2E,6E)-farnesyl diphosphate + H2O = Fe(II)-heme o + diphosphate. It participates in porphyrin-containing compound metabolism; heme O biosynthesis; heme O from protoheme: step 1/1. Converts heme B (protoheme IX) to heme O by substitution of the vinyl group on carbon 2 of heme B porphyrin ring with a hydroxyethyl farnesyl side group. The polypeptide is Protoheme IX farnesyltransferase (Beijerinckia indica subsp. indica (strain ATCC 9039 / DSM 1715 / NCIMB 8712)).